The following is a 346-amino-acid chain: Uroporphyrinogen decarboxylase (346 aa).

Residues 23-27, Asp73, Tyr151, Ser206, and His321 contribute to the substrate site; that span reads RQAGR.

Belongs to the uroporphyrinogen decarboxylase family. Homodimer.

It localises to the cytoplasm. It catalyses the reaction uroporphyrinogen III + 4 H(+) = coproporphyrinogen III + 4 CO2. It functions in the pathway porphyrin-containing compound metabolism; protoporphyrin-IX biosynthesis; coproporphyrinogen-III from 5-aminolevulinate: step 4/4. Catalyzes the decarboxylation of four acetate groups of uroporphyrinogen-III to yield coproporphyrinogen-III. This is Uroporphyrinogen decarboxylase from Sulfurovum sp. (strain NBC37-1).